The chain runs to 390 residues: Protein SOSEKI 4 (390 aa).

A DIX-like oligomerization domain region spans residues 22 to 115 (RMAEVLYVLS…YALKATKRFD (94 aa)). 2 disordered regions span residues 210–247 (KSNS…NRTG) and 291–321 (RESN…SGGS). Positions 304–321 (PSVQAETHVSKLSKSGGS) are enriched in polar residues.

This sequence belongs to the SOSEKI family. Homodimer. Forms long polymer filaments with other SOKs proteins polymers crucial for polar localization and biological activity.

Its subcellular location is the cell membrane. Its function is as follows. SOSEKI proteins locally interpret global polarity cues and can influence cell division orientation to coordinate cell polarization relative to body axes. This Physcomitrium patens (Spreading-leaved earth moss) protein is Protein SOSEKI 4.